The primary structure comprises 318 residues: tRNA dimethylallyltransferase (318 aa).

Residue 28–35 coordinates ATP; sequence GPTGAGKS. 30–35 contacts substrate; sequence TGAGKS. An interaction with substrate tRNA region spans residues 53 to 56; that stretch reads DSMQ.

Belongs to the IPP transferase family. In terms of assembly, monomer. It depends on Mg(2+) as a cofactor.

The catalysed reaction is adenosine(37) in tRNA + dimethylallyl diphosphate = N(6)-dimethylallyladenosine(37) in tRNA + diphosphate. In terms of biological role, catalyzes the transfer of a dimethylallyl group onto the adenine at position 37 in tRNAs that read codons beginning with uridine, leading to the formation of N6-(dimethylallyl)adenosine (i(6)A). The polypeptide is tRNA dimethylallyltransferase (Parafrankia sp. (strain EAN1pec)).